A 160-amino-acid polypeptide reads, in one-letter code: 6,7-dimethyl-8-ribityllumazine synthase (160 aa).

Residues Trp-26, 59 to 61 (AVE), and 81 to 83 (VVI) contribute to the 5-amino-6-(D-ribitylamino)uracil site. (2S)-2-hydroxy-3-oxobutyl phosphate is bound at residue 86-87 (GT). His-89 acts as the Proton donor in catalysis. Phe-114 contributes to the 5-amino-6-(D-ribitylamino)uracil binding site. Arg-128 is a (2S)-2-hydroxy-3-oxobutyl phosphate binding site.

The protein belongs to the DMRL synthase family.

The catalysed reaction is (2S)-2-hydroxy-3-oxobutyl phosphate + 5-amino-6-(D-ribitylamino)uracil = 6,7-dimethyl-8-(1-D-ribityl)lumazine + phosphate + 2 H2O + H(+). It functions in the pathway cofactor biosynthesis; riboflavin biosynthesis; riboflavin from 2-hydroxy-3-oxobutyl phosphate and 5-amino-6-(D-ribitylamino)uracil: step 1/2. In terms of biological role, catalyzes the formation of 6,7-dimethyl-8-ribityllumazine by condensation of 5-amino-6-(D-ribitylamino)uracil with 3,4-dihydroxy-2-butanone 4-phosphate. This is the penultimate step in the biosynthesis of riboflavin. The sequence is that of 6,7-dimethyl-8-ribityllumazine synthase from Frankia casuarinae (strain DSM 45818 / CECT 9043 / HFP020203 / CcI3).